The primary structure comprises 283 residues: Pantothenate synthetase (283 aa).

34 to 41 contributes to the ATP binding site; the sequence is MGALHEGH. Histidine 41 acts as the Proton donor in catalysis. Residue glutamine 65 participates in (R)-pantoate binding. A beta-alanine-binding site is contributed by glutamine 65. 152–155 lines the ATP pocket; sequence GEKD. Glutamine 158 contacts (R)-pantoate. Residue 189–192 participates in ATP binding; sequence MSSR.

This sequence belongs to the pantothenate synthetase family. As to quaternary structure, homodimer.

The protein localises to the cytoplasm. It catalyses the reaction (R)-pantoate + beta-alanine + ATP = (R)-pantothenate + AMP + diphosphate + H(+). The protein operates within cofactor biosynthesis; (R)-pantothenate biosynthesis; (R)-pantothenate from (R)-pantoate and beta-alanine: step 1/1. Its function is as follows. Catalyzes the condensation of pantoate with beta-alanine in an ATP-dependent reaction via a pantoyl-adenylate intermediate. This Rhodopseudomonas palustris (strain BisA53) protein is Pantothenate synthetase.